A 189-amino-acid chain; its full sequence is Inner membrane-spanning protein YciB (189 aa).

Transmembrane regions (helical) follow at residues 3-23 (LLID…WGIY), 47-67 (IEPM…ATLL), 76-96 (WKPT…QLFF), 121-141 (WSWT…AHAF), and 149-169 (FKLF…ALYL).

It belongs to the YciB family.

The protein resides in the cell inner membrane. Its function is as follows. Plays a role in cell envelope biogenesis, maintenance of cell envelope integrity and membrane homeostasis. The chain is Inner membrane-spanning protein YciB from Paracidovorax citrulli (strain AAC00-1) (Acidovorax citrulli).